The sequence spans 78 residues: Large ribosomal subunit protein bL28 (78 aa).

The tract at residues 1–23 is disordered; sequence MSRVCQVSGKRVQTGNNVSHANN. The segment covering 11 to 22 has biased composition (polar residues); sequence RVQTGNNVSHAN.

It belongs to the bacterial ribosomal protein bL28 family.

The chain is Large ribosomal subunit protein bL28 from Stenotrophomonas maltophilia (strain R551-3).